The following is a 209-amino-acid chain: Uracil phosphoribosyltransferase (209 aa).

5-phospho-alpha-D-ribose 1-diphosphate-binding positions include arginine 79, arginine 104, and 131–139 (DPMLATGGS). Residues isoleucine 194 and 199-201 (GDA) each bind uracil. Position 200 (aspartate 200) interacts with 5-phospho-alpha-D-ribose 1-diphosphate.

The protein belongs to the UPRTase family. Mg(2+) serves as cofactor.

The enzyme catalyses UMP + diphosphate = 5-phospho-alpha-D-ribose 1-diphosphate + uracil. It participates in pyrimidine metabolism; UMP biosynthesis via salvage pathway; UMP from uracil: step 1/1. With respect to regulation, allosterically activated by GTP. Its function is as follows. Catalyzes the conversion of uracil and 5-phospho-alpha-D-ribose 1-diphosphate (PRPP) to UMP and diphosphate. In Levilactobacillus brevis (strain ATCC 367 / BCRC 12310 / CIP 105137 / JCM 1170 / LMG 11437 / NCIMB 947 / NCTC 947) (Lactobacillus brevis), this protein is Uracil phosphoribosyltransferase.